A 2784-amino-acid polypeptide reads, in one-letter code: Cilia- and flagella-associated protein 46 (2784 aa).

One copy of the TPR 1 repeat lies at 129–162; that stretch reads GLEVAAANQPRYQFLVYNASVHHWRVVAPLHRDG. Residues 242–268 are a coiled coil; that stretch reads TAAAAKLTELQKDVARLQVHLATLAAA. One copy of the TPR 2 repeat lies at 401–434; that stretch reads SLAPVVVAAHVKALEQLEDVLTTFTKLADVEGIH. Disordered regions lie at residues 543–562 and 581–607; these read SAEP…RSKE and RDLP…AAAR. Residues 585–595 show a composition bias toward pro residues; sequence HPPPPAPTDPP. A coiled-coil region spans residues 644-665; sequence AVDREMVLLQAQLAHYEAEAAI. Positions 670-697 are disordered; that stretch reads RRRADISPPTRPSPPEVDGEGVRQPPAT. One copy of the TPR 3 repeat lies at 708–743; the sequence is ASVRSMRGAMSVNEPWLTLNNAVQLYNAALPLMQQH. Disordered stretches follow at residues 799-837 and 929-954; these read DAGQ…PAYK and RVNE…KPHG. Positions 802–817 are enriched in acidic residues; that stretch reads QELEDDDDEDSLDEDG. The TPR 4 repeat unit spans residues 976-1009; that stretch reads LELWAKMARAVADAGVWPAALECSAAALAALPGA. Over residues 1275–1288 the composition is skewed to acidic residues; that stretch reads TGDLDGDGTDDEDD. Disordered stretches follow at residues 1275-1351 and 1640-1673; these read TGDL…RVPE and AAGG…HGQL. The span at 1298-1311 shows a compositional bias: gly residues; the sequence is SGGGSSSGRAGGGF. Positions 1646–1658 are enriched in basic and acidic residues; sequence GGRESPSPHDDGI. TPR repeat units follow at residues 1712–1745 and 1854–1886; these read HDVW…AADC and MEML…LAAR. The stretch at 1961–1984 forms a coiled coil; it reads RLAEVQLAAAEERERLAGADREKA. 4 disordered regions span residues 2068 to 2112, 2278 to 2303, 2346 to 2389, and 2441 to 2465; these read RPFV…EAAA, ATAE…PAAA, AAKG…PGAA, and LPLP…AGPT. Positions 2069 to 2083 are enriched in pro residues; it reads PFVPPPKPPGAPKRP. Residues 2087–2096 are compositionally biased toward acidic residues; the sequence is AEEEEDEEGP. Over residues 2097 to 2112 the composition is skewed to low complexity; sequence DTAAADAAAEAAEAAA. Positions 2378–2389 are enriched in low complexity; that stretch reads SKQGPKSGPGAA. Residues 2450–2461 show a composition bias toward basic and acidic residues; the sequence is DGKKEKKDKKEA. The TPR 7 repeat unit spans residues 2613 to 2646; that stretch reads ATGGPCTGLLFLGVGRFAAHVPPAVLASAPLGGC.

This sequence belongs to the CFAP46 family. In terms of assembly, part of the PDCP1 complex composed of CFAP46, CFAP54, CFAP74 and CFAP221; the PDCP1 complex binds calmodulin.

It localises to the cytoplasm. Its subcellular location is the cytoskeleton. The protein localises to the cilium axoneme. Functionally, as part of the central apparatus of the cilium axoneme plays a role in cilium movement and thereby cell motility. This is Cilia- and flagella-associated protein 46 from Chlamydomonas reinhardtii (Chlamydomonas smithii).